We begin with the raw amino-acid sequence, 64 residues long: Conotoxin mr5.3 (64 aa).

Positions 1-19 (MRCVPVFVILLLLIASVPS) are cleaved as a signal peptide. A propeptide spanning residues 20-48 (VDAQLKTKDDMPLASSHANVKRTLQILRN) is cleaved from the precursor. 4-carboxyglutamate occurs at positions 56 and 60.

Post-translationally, contains 2 disulfide bonds that can be either 'C1-C3, C2-C4' or 'C1-C4, C2-C3', since these disulfide connectivities have been observed for conotoxins with cysteine framework V (for examples, see AC P0DQQ7 and AC P81755). In terms of tissue distribution, expressed by the venom duct.

Its subcellular location is the secreted. The chain is Conotoxin mr5.3 from Conus marmoreus (Marble cone).